A 235-amino-acid polypeptide reads, in one-letter code: FsC-acetyl coenzyme A-N(2)-transacetylase (235 aa).

One can recognise an N-acetyltransferase domain in the interval 14 to 190 (LELVPLGHEH…RYSITREEWL (177 aa)). CoA is bound by residues 106–108 (FRV), G114, N146, and 151–153 (AVM).

Its pathway is siderophore biosynthesis. In terms of biological role, fsC-acetyl coenzyme A-N(2)-transacetylase; part of the siderophore biosynthetic pathway. Aspergillus fumigatus produces 4 types of siderophores, low-molecular-mass iron chelators, including excreted fusarinine C (FsC) and triacetylfusarinine C (TAFC) for iron uptake and intacellular ferricrocin (FC) for hyphal and hydroxyferricrocin (HFC) for conidial iron distribution and storage. TAFC consists of 3 N(2)-acetyl-N(5)-anhydromevalonyl-N(5)-hydroxyornithine residues cyclically linked by ester bonds; FC is a cyclic hexapeptide with the structure Gly-Ser-Gly-(N(5)-acetyl-N(5)-hydroxyornithine)x3. The biosynthesis of all four siderophores depends on the hydroxylation of ornithine, catalyzed by the monooxygenase sidA. Subsequently, the pathways for biosynthesis of extra- and intracellular siderophores split. For biosynthesis of extracellular siderophores, the transacylase sidF transfers anhydromevalonyl to N(5)-hydroxyornithine. The required anhydromevalonyl-CoA moiety is derived from mevalonate by CoA ligation and dehydration catalyzed by sidI and sidH respectively. The acetylation of N(5)-hydroxyornithine for FC biosynthesis involves the constitutively expressed sidL. FC is hydroxylated to HFC by an as yet uncharacterized enzyme during conidiation. Assembly of fusarinine C (FsC) and FC is catalyzed by two different nonribosomal peptide synthetases (NRPS), sidD and sidC respectively. Subsequently, sidG catalyzes N2-acetylation of FsC for forming TAFC. Both extra- and intracellular siderophores are crucial for growth during iron limitation and virulence. In Aspergillus fumigatus (strain ATCC MYA-4609 / CBS 101355 / FGSC A1100 / Af293) (Neosartorya fumigata), this protein is FsC-acetyl coenzyme A-N(2)-transacetylase.